Reading from the N-terminus, the 688-residue chain is Glycine--tRNA ligase beta subunit (688 aa).

It belongs to the class-II aminoacyl-tRNA synthetase family. In terms of assembly, tetramer of two alpha and two beta subunits.

The protein resides in the cytoplasm. It catalyses the reaction tRNA(Gly) + glycine + ATP = glycyl-tRNA(Gly) + AMP + diphosphate. The sequence is that of Glycine--tRNA ligase beta subunit from Aliivibrio fischeri (strain MJ11) (Vibrio fischeri).